The primary structure comprises 674 residues: DNA ligase (674 aa).

Residues 42–46 (DNVYD), 91–92 (SM), and glutamate 121 each bind NAD(+). Lysine 123 acts as the N6-AMP-lysine intermediate in catalysis. NAD(+) is bound by residues arginine 144, glutamate 178, lysine 294, and lysine 318. The Zn(2+) site is built by cysteine 412, cysteine 415, cysteine 430, and cysteine 435. The BRCT domain maps to 596-674 (VKDSFVAGKT…ETELLANLKD (79 aa)).

It belongs to the NAD-dependent DNA ligase family. LigA subfamily. Mg(2+) is required as a cofactor. Requires Mn(2+) as cofactor.

It carries out the reaction NAD(+) + (deoxyribonucleotide)n-3'-hydroxyl + 5'-phospho-(deoxyribonucleotide)m = (deoxyribonucleotide)n+m + AMP + beta-nicotinamide D-nucleotide.. In terms of biological role, DNA ligase that catalyzes the formation of phosphodiester linkages between 5'-phosphoryl and 3'-hydroxyl groups in double-stranded DNA using NAD as a coenzyme and as the energy source for the reaction. It is essential for DNA replication and repair of damaged DNA. The chain is DNA ligase from Lacticaseibacillus paracasei (strain ATCC 334 / BCRC 17002 / CCUG 31169 / CIP 107868 / KCTC 3260 / NRRL B-441) (Lactobacillus paracasei).